The chain runs to 303 residues: Uricase (303 aa).

Catalysis depends on charge relay system residues Lys12 and Thr60. 7 residues coordinate urate: Thr60, Asp61, Phe162, Arg179, Val234, Gln235, and Asn261. The active-site Charge relay system is the His263. The Microbody targeting signal signature appears at 301–303 (TKL).

The protein belongs to the uricase family.

It localises to the peroxisome. The catalysed reaction is urate + O2 + H2O = 5-hydroxyisourate + H2O2. It functions in the pathway purine metabolism; urate degradation; (S)-allantoin from urate: step 1/3. Its function is as follows. Catalyzes the oxidation of uric acid to 5-hydroxyisourate, which is further processed to form (S)-allantoin. The polypeptide is Uricase (Cyberlindnera jadinii (Torula yeast)).